The chain runs to 492 residues: Solute carrier family 2, facilitated glucose transporter member 1 (492 aa).

N-acetylmethionine is present on Met-1. Residues 1–11 (MEPSSKKVTGR) are Cytoplasmic-facing. Residues 12 to 33 (LMLAVGGAVLGSLQFGYNTGVI) traverse the membrane as a helical segment. The Extracellular portion of the chain corresponds to 34 to 66 (NAPQKVIEEFYNQTWIHRYGERILPTTLTTLWS). Asn-45 carries N-linked (GlcNAc...) asparagine glycosylation. Residues 67-87 (LSVAIFSVGGMIGSFSVGLFV) form a helical membrane-spanning segment. Residues 88–90 (NRF) lie on the Cytoplasmic side of the membrane. Residues 91 to 112 (GRRNSMLMMNLLAFVSAVLMGF) traverse the membrane as a helical segment. The Extracellular portion of the chain corresponds to 113-120 (SKLAKSFE). Residues 121-144 (MLILGRFIIGVYCGLTTGFVPMYV) traverse the membrane as a helical segment. At 145–155 (GEVSPTALRGA) the chain is on the cytoplasmic side. The helical transmembrane segment at 156-176 (LGTLHQLGIVVGILIAQVFGL) threads the bilayer. Gln-161 contacts D-glucose. The Extracellular portion of the chain corresponds to 177 to 185 (DSIMGNEDL). Residues 186–206 (WPLLLSVIFVPALLQCIVLPL) traverse the membrane as a helical segment. Topologically, residues 207–271 (CPESPRFLLI…LFRSPAYRQP (65 aa)) are cytoplasmic. Ser-226 carries the phosphoserine modification. The chain crosses the membrane as a helical span at residues 272–293 (ILSAVVLQLSQQLSGINAVFYY). D-glucose-binding positions include 282 to 283 (QQ) and Asn-288. The Extracellular portion of the chain corresponds to 294-306 (STSIFEKAGVQQP). The chain crosses the membrane as a helical span at residues 307–328 (VYATIGSGIVNTAFTVVSLFVV). Asn-317 is a binding site for D-glucose. Topologically, residues 329–334 (ERAGRR) are cytoplasmic. The helical transmembrane segment at 335 to 355 (TLHLIGLAGMAACAVLMTIAL) threads the bilayer. Over 356-365 (ALLEQLPWMS) the chain is Extracellular. Residues 366–388 (YLSIVAIFGFVAFFEVGPGPIPW) form a helical membrane-spanning segment. Residues Glu-380 and Trp-388 each coordinate D-glucose. Topologically, residues 389–401 (FIVAELFSQGPRP) are cytoplasmic. Residues 402-422 (AAVAVAGFSNWTSNFIVGMCF) traverse the membrane as a helical segment. The Extracellular portion of the chain corresponds to 423–429 (QYVEQLC). Residues 430-450 (GPYVFIIFTVLLVLFFIFTYF) traverse the membrane as a helical segment. Residues 451 to 492 (KVPETKGRTFDEIASGFRQGGASQSDKTPEELFHPLGADSQV) lie on the Cytoplasmic side of the membrane. Position 465 is a phosphoserine (Ser-465). A disordered region spans residues 468 to 492 (RQGGASQSDKTPEELFHPLGADSQV). Thr-478 carries the phosphothreonine modification. The residue at position 490 (Ser-490) is a Phosphoserine.

The protein belongs to the major facilitator superfamily. Sugar transporter (TC 2.A.1.1) family. Glucose transporter subfamily. As to quaternary structure, found in a complex with ADD2, DMTN and SLC2A1. Interacts (via C-terminus cytoplasmic region) with DMTN. Interacts with SNX27; the interaction is required when endocytosed to prevent degradation in lysosomes and promote recycling to the plasma membrane. Interacts with GIPC (via PDZ domain). Interacts with STOM. Interacts with SGTA (via Gln-rich region). Interacts with BSG. Interacts with SMIM43; the interaction may promote SLC2A1-mediated glucose transport to meet the energy needs of mesendoderm differentiation. Post-translationally, phosphorylation at Ser-226 by PKC promotes glucose uptake by increasing cell membrane localization.

It is found in the cell membrane. The protein localises to the photoreceptor inner segment. It carries out the reaction D-glucose(out) = D-glucose(in). With respect to regulation, the uptake of glucose is inhibited by cytochalasin B. Glucose uptake is increased in response to phorbol ester 12-O-tetradecanoylphorbol-13-acetate (TPA) treatment: TPA-induced glucose uptake requires phosphorylation at Ser-226. Functionally, facilitative glucose transporter, which is responsible for constitutive or basal glucose uptake. Has a very broad substrate specificity; can transport a wide range of aldoses including both pentoses and hexoses. Most important energy carrier of the brain: present at the blood-brain barrier and assures the energy-independent, facilitative transport of glucose into the brain. In association with BSG and NXNL1, promotes retinal cone survival by increasing glucose uptake into photoreceptors. Required for mesendoderm differentiation. This is Solute carrier family 2, facilitated glucose transporter member 1 from Oryctolagus cuniculus (Rabbit).